Reading from the N-terminus, the 88-residue chain is Acyl-CoA-binding protein homolog (88 aa).

The ACB domain occupies 3-88; the sequence is PQADFDKAAG…AHELIEKYGL (86 aa). Residues Lys-15, 30–34, Lys-52, Lys-56, and Tyr-75 each bind an acyl-CoA; that span reads YGLYK.

This sequence belongs to the ACBP family. As to expression, brain. Is selectively expressed in glial cells.

The protein resides in the endoplasmic reticulum. Its subcellular location is the golgi apparatus. Functionally, may play important functions in the control of brain and pituitary activities. May regulate GABA neurotransmission through a paracrine and/or autocrine mechanism. May not bind acyl-CoA esters. This is Acyl-CoA-binding protein homolog from Pelophylax ridibundus (Marsh frog).